An 895-amino-acid polypeptide reads, in one-letter code: Protein translocase subunit SecA (895 aa).

Residues Q89, 107-111 (GEGKT), and D502 each bind ATP. Disordered regions lie at residues 560–579 (RRID…PGRT) and 848–884 (AAPA…CGSG). Zn(2+)-binding residues include C879, C881, C890, and H891.

This sequence belongs to the SecA family. In terms of assembly, monomer and homodimer. Part of the essential Sec protein translocation apparatus which comprises SecA, SecYEG and auxiliary proteins SecDF-YajC and YidC. Zn(2+) is required as a cofactor.

It localises to the cell inner membrane. The protein resides in the cytoplasm. It carries out the reaction ATP + H2O + cellular proteinSide 1 = ADP + phosphate + cellular proteinSide 2.. Functionally, part of the Sec protein translocase complex. Interacts with the SecYEG preprotein conducting channel. Has a central role in coupling the hydrolysis of ATP to the transfer of proteins into and across the cell membrane, serving both as a receptor for the preprotein-SecB complex and as an ATP-driven molecular motor driving the stepwise translocation of polypeptide chains across the membrane. The sequence is that of Protein translocase subunit SecA from Ruegeria sp. (strain TM1040) (Silicibacter sp.).